We begin with the raw amino-acid sequence, 1039 residues long: Potassium-transporting ATPase alpha chain 2 (1039 aa).

At 1–102 (MHQKTPEIYS…NSLTPPKQTP (102 aa)) the chain is on the cytoplasmic side. A helical transmembrane segment spans residues 103–123 (EIVKFLKQMVGGFSILLWVGA). Topologically, residues 124 to 146 (FLCWIAYGIQYSSDKSASLNNVY) are lumenal. The helical transmembrane segment at 147 to 167 (LGCVLGLVVILTGIFAYYQEA) threads the bilayer. Residues 168-303 (KSTNIMSSFN…NEKTPIAIEI (136 aa)) lie on the Cytoplasmic side of the membrane. Residues 304–323 (EHFVHIVAGVAVSIGILFFI) traverse the membrane as a helical segment. Residues 324–335 (IAVSLKYQVLDS) lie on the Lumenal side of the membrane. The chain crosses the membrane as a helical span at residues 336–353 (IIFLIGIIVANVPEGLLA). Topologically, residues 354–787 (TVTVTLSLTA…EEGRLIFDNL (434 aa)) are cytoplasmic. The active-site 4-aspartylphosphate intermediate is the Asp-391. Mg(2+) is bound by residues Asp-732 and Asp-736. A helical membrane pass occupies residues 788–807 (KKTIAYSLTKNIAELCPFLI). At 808–817 (YIIVGLPLPI) the chain is on the lumenal side. Residues 818 to 838 (GTITILFIDLGTDIIPSIALA) traverse the membrane as a helical segment. Residues 839-858 (YEKAESDIMNRKPRHKNKDR) lie on the Cytoplasmic side of the membrane. Residues 859 to 881 (LVNQPLAVYSYLHIGLMQALGAF) form a helical membrane-spanning segment. Residues 882-933 (LVYFTVYAQEGFLPRTLINLRVEWEKDYVNDLKDSYGQEWTRYQREYLEWTG) are Lumenal-facing. A helical transmembrane segment spans residues 934-953 (YTAFFVGILVQQIADLIIRK). The Cytoplasmic segment spans residues 954 to 967 (TRRNSIFQQGLFRN). Ser-958 is modified (phosphoserine; by PKA). A helical membrane pass occupies residues 968–986 (KVIWVGITSQIIIGLILSY). The Lumenal segment spans residues 987–1001 (GLGSVTALSFTMLRA). A helical transmembrane segment spans residues 1002-1022 (QYWFVAVPHAILIWVYDEVRK). Residues 1023-1039 (LFIRLYPGSWWDKNMYY) are Cytoplasmic-facing.

This sequence belongs to the cation transport ATPase (P-type) (TC 3.A.3) family. Type IIC subfamily. As to quaternary structure, the ATPase pump is composed of a catalytic alpha subunit and an auxiliary non-catalytic beta subunit. The alpha subunit pairs with the beta subunit of gastric H(+)/K(+) ATPase ATP4B or the beta subunit of Na(+)/K(+) ATPases ATP1B1 and ATP1B3; this interaction is required for the formation of a functionally active pump and its targeting at the plasma membrane. Expressed in airway epithelial cells (at protein level). Found in skin and kidney. Detected in prostate basal cells (at protein level). Expression is increased in benign prostate hyperplasia and tumor tissues (at protein level).

The protein localises to the apical cell membrane. It carries out the reaction K(+)(out) + ATP + H2O + H(+)(in) = K(+)(in) + ADP + phosphate + 2 H(+)(out). The catalysed reaction is K(+)(out) + Na(+)(in) + ATP + H2O = K(+)(in) + Na(+)(out) + ADP + phosphate + H(+). The ATPase activity is regulated by monovalent cations and pH. Up-regulated by K(+) ions in a dose-dependent way. Down-regulated by Na(+) ions. Inhibited by Na(+)/K(+)-ATPase inhibitor ouabain and H(+)/K(+)-ATPase inhibitor SCH-28080 with an intermediate sensitivity to completely resistant Na(+)/K(+)-ATPases and highly sensitive H(+)/K(+)-ATPases. Its function is as follows. The catalytic subunit of a H(+)/K(+) ATPase and/or Na(+)/K(+) ATPase pump which transports K(+) ions in exchange for Na(+) and/or H(+) ions across the apical membrane of epithelial cells. Uses ATP as an energy source to pump K(+) ions into the cell while transporting Na(+) and/or H(+) ions to the extracellular compartment. Involved in the maintenance of electrolyte homeostasis through K(+) ion absorption in kidney and colon. In the airway epithelium, may play a primary role in mucus acidification regulating its viscosity and clearance. This Homo sapiens (Human) protein is Potassium-transporting ATPase alpha chain 2.